The chain runs to 671 residues: DNA ligase (671 aa).

Residues 32-36 (DAEYD), 81-82 (SL), and Glu-113 each bind NAD(+). The N6-AMP-lysine intermediate role is filled by Lys-115. Residues Arg-136, Glu-173, Lys-290, and Lys-314 each contribute to the NAD(+) site. Zn(2+) is bound by residues Cys-408, Cys-411, Cys-426, and Cys-432. The BRCT domain maps to 593–671 (EIDSPFAGKT…EAEMIRLLGA (79 aa)).

This sequence belongs to the NAD-dependent DNA ligase family. LigA subfamily. Mg(2+) is required as a cofactor. The cofactor is Mn(2+).

It carries out the reaction NAD(+) + (deoxyribonucleotide)n-3'-hydroxyl + 5'-phospho-(deoxyribonucleotide)m = (deoxyribonucleotide)n+m + AMP + beta-nicotinamide D-nucleotide.. DNA ligase that catalyzes the formation of phosphodiester linkages between 5'-phosphoryl and 3'-hydroxyl groups in double-stranded DNA using NAD as a coenzyme and as the energy source for the reaction. It is essential for DNA replication and repair of damaged DNA. The chain is DNA ligase from Salmonella heidelberg (strain SL476).